Reading from the N-terminus, the 136-residue chain is uncharacterized protein (136 aa).

This is an uncharacterized protein from Ictaluridae (bullhead catfishes).